Consider the following 442-residue polypeptide: MIRGAWMYPREDEAVLKICWEPRHSDKPCADSERAQRWRMSLASLLFFTVLLSNHLWLVSAGAKARGSFTFSLQPANSSLLPPQSFPGEGRGCWDTFLSNLTKSAAQPPHCTGVRSTHLDTACAKLHYLQRHRGSFSPSYPQPSSWSSSYWSYPPSSFSSKRNFLKAYFRNYTLSFCDTYTILDLLLGMSNPDSLDCSLESLMEDFVGAAAASPALIEGEVCSSCIQAYQRLDQHAQEKYEEFDFVLEKYLQSGEYSVRSCVGDCKAVYKAWLCSEYFNVTQRQCRHRIPCKQYCLEVQTRCPFMLPDNDDLIYGGLPGFICTDMLENHMSNTEAECCDVRWHSCKTQGSGNHNTSTKSTDSRFKYYPHHQHHRDHHLHPYHHQHHQSLLPVSAGSRLGNTRLRLCVLVLMLLHTMASFSVVQNGVTLEPLPGLDDSSSHEE.

The helical transmembrane segment at 42 to 62 (LASLLFFTVLLSNHLWLVSAG) threads the bilayer. Residues Asn77, Asn100, Asn171, Asn279, and Asn354 are each glycosylated (N-linked (GlcNAc...) asparagine). Residues 406–426 (CVLVLMLLHTMASFSVVQNGV) form a helical membrane-spanning segment.

This sequence belongs to the NALF family.

The protein resides in the membrane. Probable component of the NALCN channel complex, a channel that regulates the resting membrane potential and controls neuronal excitability. This is NALCN channel auxiliary factor 2 (nalf2) from Xenopus tropicalis (Western clawed frog).